A 360-amino-acid chain; its full sequence is DNA replication and repair protein RecF (360 aa).

Glycine 33–threonine 40 provides a ligand contact to ATP.

It belongs to the RecF family.

The protein resides in the cytoplasm. In terms of biological role, the RecF protein is involved in DNA metabolism; it is required for DNA replication and normal SOS inducibility. RecF binds preferentially to single-stranded, linear DNA. It also seems to bind ATP. The sequence is that of DNA replication and repair protein RecF from Rickettsia akari (strain Hartford).